The chain runs to 390 residues: S-adenosylmethionine synthase 3 (390 aa).

Glutamate 9 provides a ligand contact to Mg(2+). Histidine 15 serves as a coordination point for ATP. K(+) is bound at residue glutamate 43. The L-methionine site is built by glutamate 56 and glutamine 99. Residues 167 to 169 (DGK), 235 to 238 (SGRF), aspartate 246, 252 to 253 (RK), alanine 269, lysine 273, and lysine 277 contribute to the ATP site. Aspartate 246 lines the L-methionine pocket. An L-methionine-binding site is contributed by lysine 277.

It belongs to the AdoMet synthase family. As to quaternary structure, homotetramer. Interacts with GRF3. Requires Mn(2+) as cofactor. Mg(2+) is required as a cofactor. Co(2+) serves as cofactor. The cofactor is K(+).

It is found in the cytoplasm. It carries out the reaction L-methionine + ATP + H2O = S-adenosyl-L-methionine + phosphate + diphosphate. Its pathway is amino-acid biosynthesis; S-adenosyl-L-methionine biosynthesis; S-adenosyl-L-methionine from L-methionine: step 1/1. With respect to regulation, inhibited by 5,5'-dithiobis-2-nitrobenzoic acid (DTNB) and N-ethylmaleimide (NEM) (in vitro). Catalyzes the formation of S-adenosylmethionine from methionine and ATP. The reaction comprises two steps that are both catalyzed by the same enzyme: formation of S-adenosylmethionine (AdoMet) and triphosphate, and subsequent hydrolysis of the triphosphate. Involved in the biosynthesis of lignin. In Arabidopsis thaliana (Mouse-ear cress), this protein is S-adenosylmethionine synthase 3 (METK3).